Reading from the N-terminus, the 358-residue chain is MAAMLASKQGAFMGRSSFAPAPKGVASRGSLQVVAGLKEVRDRIASVKNTQKITDAMKLVAAAKVRRAQEAVVNGRPFSENLVKVLYGVNQRVRQEDVDSPLCAVRPVKSVLLVVLTGDRGLCGGYNNFIIKKTEARYRELTAMGVKVNLVCVGRKGAQYFARRKQYNIVKSFSLGAAPSTKEAQGIADEIFASFIAQESDKVELVFTKFISLINSNPTIQTLLPMTPMGELCDVDGKCVDAADDEIFKLTTKGGEFAVEREKTTIETEALDPSLIFEQEPAQILDALLPLYMSSCLLRSLQEALASELAARMNAMNNASDNAKELKKGLTVQYNKQRQAKITQELAEIVGGAAATSG.

Residues Met-1–Ala-35 constitute a chloroplast transit peptide. The active site involves Cys-123. Cysteines 233 and 239 form a disulfide.

This sequence belongs to the ATPase gamma chain family. F-type ATPases have 2 components, F(1) - the catalytic core - and F(0) - the membrane proton channel. F(1) has five subunits: alpha(3), beta(3), gamma(1), delta(1), epsilon(1). F(0) has four main subunits: a(1), b(1), b'(1) and c(10-14). The alpha and beta chains form an alternating ring which encloses part of the gamma chain. F(1) is attached to F(0) by a central stalk formed by the gamma and epsilon chains, while a peripheral stalk is formed by the delta, b and b' chains.

It localises to the plastid. The protein localises to the chloroplast thylakoid membrane. Functionally, f(1)F(0) ATP synthase produces ATP from ADP in the presence of a proton or sodium gradient. F-type ATPases consist of two structural domains, F(1) containing the extramembraneous catalytic core and F(0) containing the membrane proton channel, linked together by a central stalk and a peripheral stalk. During catalysis, ATP synthesis in the catalytic domain of F(1) is coupled via a rotary mechanism of the central stalk subunits to proton translocation. In terms of biological role, produces ATP from ADP in the presence of a proton gradient across the membrane. The gamma chain is believed to be important in regulating ATPase activity and the flow of protons through the CF(0) complex. The chain is ATP synthase gamma chain, chloroplastic from Chlamydomonas reinhardtii (Chlamydomonas smithii).